Consider the following 208-residue polypeptide: ATP-dependent Clp protease proteolytic subunit (208 aa).

Ser-106 (nucleophile) is an active-site residue. His-131 is an active-site residue.

Belongs to the peptidase S14 family. In terms of assembly, fourteen ClpP subunits assemble into 2 heptameric rings which stack back to back to give a disk-like structure with a central cavity, resembling the structure of eukaryotic proteasomes.

It localises to the cytoplasm. It carries out the reaction Hydrolysis of proteins to small peptides in the presence of ATP and magnesium. alpha-casein is the usual test substrate. In the absence of ATP, only oligopeptides shorter than five residues are hydrolyzed (such as succinyl-Leu-Tyr-|-NHMec, and Leu-Tyr-Leu-|-Tyr-Trp, in which cleavage of the -Tyr-|-Leu- and -Tyr-|-Trp bonds also occurs).. In terms of biological role, cleaves peptides in various proteins in a process that requires ATP hydrolysis. Has a chymotrypsin-like activity. Plays a major role in the degradation of misfolded proteins. This Dinoroseobacter shibae (strain DSM 16493 / NCIMB 14021 / DFL 12) protein is ATP-dependent Clp protease proteolytic subunit.